A 157-amino-acid polypeptide reads, in one-letter code: Transcription factor HES-2 (157 aa).

In terms of domain architecture, bHLH spans leucine 13–glutamine 70. In terms of domain architecture, Orange spans tyrosine 86–leucine 119. The interval valine 124–tryptophan 157 is disordered. Positions threonine 132–glycine 149 are enriched in pro residues. A WRPW motif motif is present at residues tryptophan 154 to tryptophan 157.

Transcription repression requires formation of a complex with a corepressor protein of the Groucho/TLE family.

The protein localises to the nucleus. Transcriptional repressor of genes that require a bHLH protein for their transcription. The protein is Transcription factor HES-2 (Hes2) of Mus musculus (Mouse).